The primary structure comprises 231 residues: Large ribosomal subunit protein uL1 (231 aa).

Belongs to the universal ribosomal protein uL1 family. Part of the 50S ribosomal subunit.

Functionally, binds directly to 23S rRNA. The L1 stalk is quite mobile in the ribosome, and is involved in E site tRNA release. In terms of biological role, protein L1 is also a translational repressor protein, it controls the translation of the L11 operon by binding to its mRNA. This chain is Large ribosomal subunit protein uL1, found in Ectopseudomonas mendocina (strain ymp) (Pseudomonas mendocina).